A 120-amino-acid chain; its full sequence is Immunoglobulin kappa variable 2-29 (120 aa).

The N-terminal stretch at methionine 1–alanine 20 is a signal peptide. Positions aspartate 21 to cysteine 43 are framework-1. An Ig-like domain is found at aspartate 21–proline 120. A disulfide bridge links cysteine 43 with cysteine 113. Positions lysine 44–tyrosine 59 are complementarity-determining-1. The framework-2 stretch occupies residues tryptophan 60–tyrosine 74. Residues glutamate 75 to serine 81 are complementarity-determining-2. The framework-3 stretch occupies residues glycine 82 to cysteine 113. Positions methionine 114 to proline 120 are complementarity-determining-3.

Immunoglobulins are composed of two identical heavy chains and two identical light chains; disulfide-linked.

The protein localises to the secreted. Its subcellular location is the cell membrane. Its function is as follows. V region of the variable domain of immunoglobulin light chains that participates in the antigen recognition. Immunoglobulins, also known as antibodies, are membrane-bound or secreted glycoproteins produced by B lymphocytes. In the recognition phase of humoral immunity, the membrane-bound immunoglobulins serve as receptors which, upon binding of a specific antigen, trigger the clonal expansion and differentiation of B lymphocytes into immunoglobulins-secreting plasma cells. Secreted immunoglobulins mediate the effector phase of humoral immunity, which results in the elimination of bound antigens. The antigen binding site is formed by the variable domain of one heavy chain, together with that of its associated light chain. Thus, each immunoglobulin has two antigen binding sites with remarkable affinity for a particular antigen. The variable domains are assembled by a process called V-(D)-J rearrangement and can then be subjected to somatic hypermutations which, after exposure to antigen and selection, allow affinity maturation for a particular antigen. The sequence is that of Immunoglobulin kappa variable 2-29 from Homo sapiens (Human).